The following is a 141-amino-acid chain: Meiotically up-regulated gene 118 protein (141 aa).

The segment covering 106-115 (LSSQKSARQP) has biased composition (polar residues). The segment at 106-141 (LSSQKSARQPTKTVASSSSSSSKSTTVSKSSSKSQV) is disordered. Over residues 116 to 141 (TKTVASSSSSSSKSTTVSKSSSKSQV) the composition is skewed to low complexity.

The protein localises to the nucleus. Has a role in meiosis. The chain is Meiotically up-regulated gene 118 protein (mug118) from Schizosaccharomyces pombe (strain 972 / ATCC 24843) (Fission yeast).